The primary structure comprises 134 residues: Gastrin-releasing peptide (134 aa).

The signal sequence occupies residues 1 to 23; it reads MRGREVPLVLLALVLCLAPRGWA. At Met50 the chain carries Methionine amide. A propeptide spanning residues 54–134 is cleaved from the precursor; the sequence is SVAESPQLHE…QHEGRNPQLN (81 aa). A disordered region spans residues 95–134; the sequence is GHQMPPWEPLSIHQPAWDSEDVSNFKDTGPQHEGRNPQLN. Residues 123-134 are compositionally biased toward basic and acidic residues; sequence GPQHEGRNPQLN.

This sequence belongs to the bombesin/neuromedin-B/ranatensin family. In terms of tissue distribution, detected in adrenal medulla (at protein level).

The protein resides in the cytoplasmic vesicle. The protein localises to the secretory vesicle lumen. It localises to the secreted. It is found in the cell projection. Its subcellular location is the neuron projection. In terms of biological role, stimulates the release of gastrin and other gastrointestinal hormones. Contributes to the perception of prurient stimuli and to the transmission of itch signals in the spinal cord that promote scratching behavior. Contributes primarily to nonhistaminergic itch sensation. In one study, shown to act in the amygdala as part of an inhibitory network which inhibits memory specifically related to learned fear. In another study, shown to act on vasoactive intestinal peptide (VIP)-expressing cells in the auditory cortex, most likely via extrasynaptic diffusion from local and long-range sources, to mediate disinhibition of glutamatergic cells via VIP cell-specific GRPR signaling which leads to enhanced auditory fear memories. Contributes to the regulation of food intake. Inhibits voltage-gated sodium channels but enhances voltage-gated potassium channels in hippocampal neurons. Induces sighing by acting directly on the pre-Botzinger complex, a cluster of several thousand neurons in the ventrolateral medulla responsible for inspiration during respiratory activity. Induces an itch response through activation of receptors present on mast cells, triggering mast cell degranulation. This chain is Gastrin-releasing peptide (GRP), found in Bos taurus (Bovine).